A 400-amino-acid polypeptide reads, in one-letter code: Na(+)/H(+) antiporter NhaA (400 aa).

Transmembrane regions (helical) follow at residues 26-46 (AGGI…NSPL), 71-91 (LIHW…GMEV), 107-127 (IFPA…YWFI), 137-157 (GWAI…ALLS), 166-186 (IFLL…IALF), 189-209 (HGLS…LILL), 212-232 (FKVS…ASVL), 233-253 (KSGV…PLKG), 273-293 (FVIL…GIDV), 299-319 (PLLL…IFGF), 340-360 (IFAV…LASL), and 373-393 (LSRL…YLFL).

The protein belongs to the NhaA Na(+)/H(+) (TC 2.A.33) antiporter family.

Its subcellular location is the cell inner membrane. The enzyme catalyses Na(+)(in) + 2 H(+)(out) = Na(+)(out) + 2 H(+)(in). Its function is as follows. Na(+)/H(+) antiporter that extrudes sodium in exchange for external protons. The sequence is that of Na(+)/H(+) antiporter NhaA from Haemophilus influenzae (strain 86-028NP).